We begin with the raw amino-acid sequence, 296 residues long: NADH-cytochrome b5 reductase 2-A (296 aa).

The chain crosses the membrane as a helical span at residues 15-35 (FVIGAPTIALCSYYYSSGAFL). The region spanning 47–151 (NNWIDLPISR…KGPIPKWKWV (105 aa)) is the FAD-binding FR-type domain. 154-189 (SFESITLIGGGTGITPLYQLIHAITKNPNDKTKIRL) lines the FAD pocket.

The protein belongs to the flavoprotein pyridine nucleotide cytochrome reductase family. It depends on FAD as a cofactor.

It is found in the mitochondrion outer membrane. The catalysed reaction is 2 Fe(III)-[cytochrome b5] + NADH = 2 Fe(II)-[cytochrome b5] + NAD(+) + H(+). In terms of biological role, may mediate the reduction of outer membrane cytochrome b5. This Vanderwaltozyma polyspora (strain ATCC 22028 / DSM 70294 / BCRC 21397 / CBS 2163 / NBRC 10782 / NRRL Y-8283 / UCD 57-17) (Kluyveromyces polysporus) protein is NADH-cytochrome b5 reductase 2-A (MCR1A).